Consider the following 790-residue polypeptide: Phenylalanine--tRNA ligase beta subunit (790 aa).

The 116-residue stretch at 39–154 folds into the tRNA-binding domain; sequence PDSLNTVVTG…ENTPLGESAC (116 aa). Positions 404–483 constitute a B5 domain; that stretch reads SDPLSLNIRP…FVQKTQKILP (80 aa). Residues aspartate 457, aspartate 463, glutamate 466, and glutamate 467 each coordinate Mg(2+). An FDX-ACB domain is found at 694–790; the sequence is PIYPSSSRDI…NLANIGKGNS (97 aa).

This sequence belongs to the phenylalanyl-tRNA synthetase beta subunit family. Type 1 subfamily. Tetramer of two alpha and two beta subunits. The cofactor is Mg(2+).

It localises to the cytoplasm. It catalyses the reaction tRNA(Phe) + L-phenylalanine + ATP = L-phenylalanyl-tRNA(Phe) + AMP + diphosphate + H(+). The sequence is that of Phenylalanine--tRNA ligase beta subunit (pheT) from Chlamydia muridarum (strain MoPn / Nigg).